We begin with the raw amino-acid sequence, 154 residues long: Protein X (154 aa).

Positions 28–48 (RPLPGPLGTLPPASPPAVPTD) are disordered. Residues 68–117 (PCALRFTSARRMETTVNAHGNLPKVLHKRTLGLSAMSTTDLEAYFKDCVF) form a mitochondrial targeting sequence region.

It belongs to the orthohepadnavirus protein X family. As to quaternary structure, may form homodimer. May interact with host CEBPA, CFLAR, CREB1, DDB1, E4F1, HBXIP, HSPD1/HSP60, NFKBIA, POLR2E and SMAD4. Interacts with host SMC5-SMC6 complex and induces its degradation. Interacts with host TRPC4AP; leading to prevent ubiquitination of TRPC4AP. Interacts with host PLSCR1; this interaction promotes ubiquitination and degradation of HBx and impairs HBx-mediated cell proliferation. In terms of processing, a fraction may be phosphorylated in insect cells and HepG2 cells, a human hepatoblastoma cell line. Phosphorylated in vitro by host protein kinase C or mitogen-activated protein kinase. N-acetylated in insect cells.

The protein resides in the host cytoplasm. The protein localises to the host nucleus. Its subcellular location is the host mitochondrion. In terms of biological role, multifunctional protein that plays a role in silencing host antiviral defenses and promoting viral transcription. Does not seem to be essential for HBV infection. May be directly involved in development of cirrhosis and liver cancer (hepatocellular carcinoma). Most of cytosolic activities involve modulation of cytosolic calcium. The effect on apoptosis is controversial depending on the cell types in which the studies have been conducted. May induce apoptosis by localizing in mitochondria and causing loss of mitochondrial membrane potential. May also modulate apoptosis by binding host CFLAR, a key regulator of the death-inducing signaling complex (DISC). Promotes viral transcription by using the host E3 ubiquitin ligase DDB1 to target the SMC5-SMC6 complex to proteasomal degradation. This host complex would otherwise bind to viral episomal DNA, and prevents its transcription. Moderately stimulates transcription of many different viral and cellular transcription elements. Promoters and enhancers stimulated by HBx contain DNA binding sites for NF-kappa-B, AP-1, AP-2, c-EBP, ATF/CREB, or the calcium-activated factor NF-AT. In Hepatitis B virus genotype B2 subtype adw (isolate China/patient4/1996) (HBV-B), this protein is Protein X.